Consider the following 351-residue polypeptide: MRKIIHVDMDCFFAAVEMRDNPALRDIPIAIGGSRECRGVISTANYPARQFGVRSAMPTAMALKLCPHLTLLPGRFDAYKEASRHVRDIFSRYTSLIEPLSLDEAWLDVTDTPHCYGSATLIAREIRQTIFNELQLTASAGVAPVKFLAKIASDLNKPNGQYVITPADVPDFLKTLPLAKIPGVGKVSAAKLESMGLITCGDIQQCDLAMLLKRFGKFGRVLWERSQGIDERDVNSERLRKSVGVERTLAEDIHEWSDCEAIIERLYPELERRLATVKPDLLIARQGVKLKFNDFQQTTQEHVWPQLNKEDLISTARKTWNERRGDRGVRLVGLHVTLLHPQLERQLVLGL.

Residues Ile4–Gly185 form the UmuC domain. Mg(2+) is bound by residues Asp8 and Asp103. Glu104 is a catalytic residue.

This sequence belongs to the DNA polymerase type-Y family. In terms of assembly, monomer. Mg(2+) is required as a cofactor.

The protein localises to the cytoplasm. It catalyses the reaction DNA(n) + a 2'-deoxyribonucleoside 5'-triphosphate = DNA(n+1) + diphosphate. Functionally, poorly processive, error-prone DNA polymerase involved in untargeted mutagenesis. Copies undamaged DNA at stalled replication forks, which arise in vivo from mismatched or misaligned primer ends. These misaligned primers can be extended by PolIV. Exhibits no 3'-5' exonuclease (proofreading) activity. May be involved in translesional synthesis, in conjunction with the beta clamp from PolIII. The polypeptide is DNA polymerase IV (Salmonella arizonae (strain ATCC BAA-731 / CDC346-86 / RSK2980)).